A 373-amino-acid chain; its full sequence is Protein-glutamate methylesterase/protein-glutamine glutaminase 1 (373 aa).

In terms of domain architecture, Response regulatory spans 16–133 (RVVVVDDSAL…ASGLTELSDQ (118 aa)). Aspartate 67 is modified (4-aspartylphosphate). Residues 175–367 (RVSTEKLICI…PALIAKLSSA (193 aa)) enclose the CheB-type methylesterase domain. Active-site residues include serine 187, histidine 213, and aspartate 309.

Belongs to the CheB family. Phosphorylated by CheA. Phosphorylation of the N-terminal regulatory domain activates the methylesterase activity.

The protein localises to the cytoplasm. It catalyses the reaction [protein]-L-glutamate 5-O-methyl ester + H2O = L-glutamyl-[protein] + methanol + H(+). It carries out the reaction L-glutaminyl-[protein] + H2O = L-glutamyl-[protein] + NH4(+). Involved in chemotaxis. Part of a chemotaxis signal transduction system that modulates chemotaxis in response to various stimuli. Catalyzes the demethylation of specific methylglutamate residues introduced into the chemoreceptors (methyl-accepting chemotaxis proteins or MCP) by CheR. Also mediates the irreversible deamidation of specific glutamine residues to glutamic acid. The sequence is that of Protein-glutamate methylesterase/protein-glutamine glutaminase 1 from Albidiferax ferrireducens (strain ATCC BAA-621 / DSM 15236 / T118) (Rhodoferax ferrireducens).